The primary structure comprises 478 residues: Alcohol dehydrogenase (quinone), cytochrome c subunit (478 aa).

A signal peptide spans 1–36 (MLNALTRDRLVSEMKQGWKLAAAIGLMAVSFGAAHA). A Pyrrolidone carboxylic acid modification is found at Gln-37. 3 Cytochrome c domains span residues 42 to 145 (ALIK…MHGV), 189 to 304 (PEVA…KSMP), and 327 to 417 (GQGN…RKGW). Cys-56, Cys-59, His-60, Cys-204, Cys-207, His-208, Cys-340, Cys-343, and His-344 together coordinate heme c.

In terms of assembly, the alcohol dehydrogenase multicomponent enzyme system is composed of a dehydrogenase subunit I (AdhA), a cytochrome c subunit II (AdhB) and a subunit III (AdhS). The cofactor is heme c.

The protein localises to the cell membrane. The enzyme catalyses ethanol + a ubiquinone = a ubiquinol + acetaldehyde. 2,6-dichloro-4-dicyanovinylphenol (PC16) and antimycin A inhibit ubiquinol oxidation activity more selectively than the ubiquinone reductase activity. Cytochrome c component of the alcohol dehydrogenase multicomponent enzyme system which is involved in the production of acetic acid and in the ethanol oxidase respiratory chain. Quinohemoprotein alcohol dehydrogenase (ADH) catalyzes the oxidation of ethanol to acetaldehyde by transferring electrons to the ubiquinone embedded in the membrane phospholipids. The electrons transfer from ethanol to membranous ubiquinone occurs from pyrroloquinoline quinone (PQQ) to one heme c in subunit I (AdhA), and finally to two heme c in subunit II (AdhB). Besides ubiquinone reduction, ADH also has a ubiquinol (QH2) oxidation reaction which mediates electron transfer from ubiquinol to the non-energy generating bypass oxidase system. The electrons transfer occurs from ubiquinol (QH2) to the additional heme c within subunit II (AdhB). Also able to use quinone analogs such as 2,3-dimethoxy-5-methyl-6-n-decyl-1,4-benzoquinone (DB) and 2,3-dimethoxy-5-methyl-6-n-pentyl-1,4-benzoquinone (PB). In Gluconobacter oxydans (strain 621H) (Gluconobacter suboxydans), this protein is Alcohol dehydrogenase (quinone), cytochrome c subunit.